The primary structure comprises 182 residues: Constitutive photomorphogenesis protein 10 (182 aa).

The UBC core domain occupies 36–182; that stretch reads ASGKRIQREM…AKEWTLRFAK (147 aa).

This sequence belongs to the ubiquitin-conjugating enzyme family. In terms of assembly, component of the CDD complex, at least composed of COP10, DET1 and DDB1A. Interacts with E3 ubiquitin ligase COP1. Interacts with E2 ubiquitin conjugating UBC5. Interacts with CSN3, CSN4 and CSN8 subunits of the COP9 complex. As to expression, expressed in flower, leaf, stem and seedling. Expressed at lower level in root.

Its subcellular location is the nucleus. Component of light signal transduction machinery. Involved in repression of photomorphogenesis in darkness by participating in the CDD complex, a complex probably required to regulate the activity of ubiquitin conjugating enzymes (E2s). Repression of photomorphogenesis is probably mediated by ubiquitination and subsequent degradation of photomorphogenesis-promoting factors such as HY5, HYH and LAF1. Although strongly related to ubiquitin-conjugating enzyme, it has no catalytic activity by itself due to the absence of the conserved Cys active site at position 120. It can however enhance the activity of E2 conjugating enzymes. This Arabidopsis thaliana (Mouse-ear cress) protein is Constitutive photomorphogenesis protein 10 (COP10).